The primary structure comprises 101 residues: Toxin Tpa8 (101 aa).

An N-terminal signal peptide occupies residues 1 to 20; it reads MVKSEMKLVIFSLFLLLIGV. The 75-residue stretch at 24–98 folds into the LCN-type CS-alpha/beta domain; it reads KNGYPVIEGG…VMDRTKEYCE (75 aa). Intrachain disulfides connect Cys44-Cys70, Cys56-Cys75, Cys60-Cys77, and Cys71-Cys97.

It belongs to the long (4 C-C) scorpion toxin superfamily. Sodium channel inhibitor family. Beta subfamily. In terms of tissue distribution, expressed by the venom gland.

The protein resides in the secreted. Excitatory insect beta-toxins induce a spastic paralysis. They bind voltage-independently at site-4 of sodium channels (Nav) and shift the voltage of activation toward more negative potentials thereby affecting sodium channel activation and promoting spontaneous and repetitive firing. In Tityus pachyurus (Colombian scorpion), this protein is Toxin Tpa8.